We begin with the raw amino-acid sequence, 296 residues long: Ribosome biogenesis GTPase A (296 aa).

The CP-type G domain occupies 14-178 (RRQVTEKLKL…LLDTPGILWP (165 aa)). GTP contacts are provided by residues 58–61 (NKAD), 130–135 (NVGKST), and Gly174.

Belongs to the TRAFAC class YlqF/YawG GTPase family. MTG1 subfamily. As to quaternary structure, interacts with ctc. Interacts with the immature 50S ribosome subunit. 2 molecules of rbgA bind to one 50S subunit.

It localises to the cytoplasm. Essential protein that is required for a late step of 50S ribosomal subunit assembly. Has GTPase activity that is stimulated by interaction with the immature 50S ribosome subunit. Binds to the 23S rRNA. Required for the association of ribosomal proteins rplP and rpmA with the large subunit. This Bacillus cereus (strain ATCC 14579 / DSM 31 / CCUG 7414 / JCM 2152 / NBRC 15305 / NCIMB 9373 / NCTC 2599 / NRRL B-3711) protein is Ribosome biogenesis GTPase A.